The chain runs to 420 residues: ATP-dependent Clp protease ATP-binding subunit ClpX (420 aa).

A ClpX-type ZB domain is found at 4 to 57 (KTPGNNGKQKLFCSFCGKEQDAVKRLVAGPGVYICDECISLCNEIIAEDHEHSH). Zn(2+) is bound by residues cysteine 16, cysteine 19, cysteine 38, and cysteine 41. Residue 122-129 (PTGSGKTL) participates in ATP binding.

Belongs to the ClpX chaperone family. Component of the ClpX-ClpP complex. Forms a hexameric ring that, in the presence of ATP, binds to fourteen ClpP subunits assembled into a disk-like structure with a central cavity, resembling the structure of eukaryotic proteasomes.

Its function is as follows. ATP-dependent specificity component of the Clp protease. It directs the protease to specific substrates. Can perform chaperone functions in the absence of ClpP. In Leptospira interrogans serogroup Icterohaemorrhagiae serovar copenhageni (strain Fiocruz L1-130), this protein is ATP-dependent Clp protease ATP-binding subunit ClpX.